We begin with the raw amino-acid sequence, 301 residues long: MTVKRILIVSGTHGNEINPIWAVKQFNREENKFKNGIEYEYIIGNPIAYEKGCRYIDADLNRSFKASKNYDQHKNSFYETNRANFLVDEFGIDGSKPCQIAIDLHTTTANMGTSIVLYGRRLKDFCLAALLQNKFGLPIYLHEKDEAQTGFLVEAWPCGLVIEIGAVAQNFYDPKIIDRFSLIISSLREEIDKLKNNLIELPKELVVHVHQGSIDYPRDEKGDIDGLIHPERINQDWKMIKKGDPLFLDSQGIIHKYDGDQLIWPVFIGEVAYREKKIAMSYTKKEVIFSKEKWVQEFASL.

Zn(2+) is bound by residues histidine 13 and glutamate 16. Substrate-binding positions include arginine 54 and 61-62; that span reads NR. Position 105 (histidine 105) interacts with Zn(2+). Residues glutamate 163 and tyrosine 273 each coordinate substrate.

Belongs to the AspA/AstE family. Aspartoacylase subfamily. Requires Zn(2+) as cofactor.

The enzyme catalyses an N-acyl-L-aspartate + H2O = a carboxylate + L-aspartate. The polypeptide is Probable aspartoacylase (Prochlorococcus marinus (strain MIT 9215)).